We begin with the raw amino-acid sequence, 320 residues long: MYAFDYEDIQLIPNMCVVNSRSECNTSVTLGKHTFKMPVVPANMATVINEELSIMLAEKNYFYVMHRFDFDAVSFIKKMKEKKLISSISVGVKEQDFKMINELTELNLIPDYITIDIAHGHANSVKEMIEHIRTKMGDQTFIIAGNVATPQAVRDLEHWGADATKVGVGPGKVCITKLKTGFGTGGWQLGAIKWCSKAATKPIIADGGLRVNGDIAKSIRFGATMCMIGSLFAAHEESPGKNVTVDNVLFKEYYGSASEYNKGEKRYVEGKKELIKVRGKLMDTYKEMEEDLQSSISYAGGKTLKAIKKVDYVILKTSNF.

Residue Cys174 is the Thioimidate intermediate of the active site. 203–226 (IIADGGLRVNGDIAKSIRFGATMC) is an NADP(+) binding site.

The protein belongs to the IMPDH/GMPR family. GuaC type 2 subfamily.

It carries out the reaction IMP + NH4(+) + NADP(+) = GMP + NADPH + 2 H(+). Its function is as follows. Catalyzes the irreversible NADPH-dependent deamination of GMP to IMP. It functions in the conversion of nucleobase, nucleoside and nucleotide derivatives of G to A nucleotides, and in maintaining the intracellular balance of A and G nucleotides. The polypeptide is GMP reductase (Mesoplasma florum (strain ATCC 33453 / NBRC 100688 / NCTC 11704 / L1) (Acholeplasma florum)).